A 227-amino-acid chain; its full sequence is MGQKVHPTGFRLGITQDWKSKWYSEKKKYTQTLHEDIKIRKFIEERYKQAGISSVLIERLGDRMRVKIMAARPGIVIGAKGAEVEKLNEIIKKLTSTKEVIVNVDEVKKPELDAKLVAEDIALQLERRVTHRRAMKKAIDSALKAGAKGIKTQVGGRIGGVDLARKEWFMAGRMPLQTLKADIDYGTARASTKYGILGIKVWIYKGDKLEGKAEEVLSRVEEELHTT.

The 70-residue stretch at 39–108 (IRKFIEERYK…EVIVNVDEVK (70 aa)) folds into the KH type-2 domain.

This sequence belongs to the universal ribosomal protein uS3 family. Part of the 30S ribosomal subunit. Forms a tight complex with proteins S10 and S14.

Its function is as follows. Binds the lower part of the 30S subunit head. Binds mRNA in the 70S ribosome, positioning it for translation. This Sulfurihydrogenibium sp. (strain YO3AOP1) protein is Small ribosomal subunit protein uS3.